The primary structure comprises 81 residues: Large ribosomal subunit protein bL27 (81 aa).

Residues 1 to 11 (MATSKSGGSSK) are compositionally biased toward polar residues. The segment at 1–21 (MATSKSGGSSKNGRDSISKRL) is disordered.

It belongs to the bacterial ribosomal protein bL27 family.

The sequence is that of Large ribosomal subunit protein bL27 from Borrelia hermsii (strain HS1 / DAH).